Reading from the N-terminus, the 278-residue chain is Probable septum site-determining protein MinC (278 aa).

Residues 104–167 (RTQQSVDPAP…ASHTPAAPQS (64 aa)) form a disordered region.

Belongs to the MinC family. In terms of assembly, interacts with MinD and FtsZ.

Its function is as follows. Cell division inhibitor that blocks the formation of polar Z ring septums. Rapidly oscillates between the poles of the cell to destabilize FtsZ filaments that have formed before they mature into polar Z rings. Prevents FtsZ polymerization. This is Probable septum site-determining protein MinC from Bordetella avium (strain 197N).